Consider the following 388-residue polypeptide: LL-diaminopimelate aminotransferase (388 aa).

Substrate-binding residues include Tyr16 and Gly41. Pyridoxal 5'-phosphate contacts are provided by residues Tyr70, 104 to 105, Tyr129, Asn179, Tyr210, and 239 to 241; these read SK and SLS. Residues Lys105, Tyr129, and Asn179 each coordinate substrate. Position 242 is an N6-(pyridoxal phosphate)lysine (Lys242). Arg250 provides a ligand contact to pyridoxal 5'-phosphate. Position 368 (Arg368) interacts with substrate.

It belongs to the class-I pyridoxal-phosphate-dependent aminotransferase family. LL-diaminopimelate aminotransferase subfamily. As to quaternary structure, homodimer. It depends on pyridoxal 5'-phosphate as a cofactor.

The enzyme catalyses (2S,6S)-2,6-diaminopimelate + 2-oxoglutarate = (S)-2,3,4,5-tetrahydrodipicolinate + L-glutamate + H2O + H(+). Its pathway is amino-acid biosynthesis; L-lysine biosynthesis via DAP pathway; LL-2,6-diaminopimelate from (S)-tetrahydrodipicolinate (aminotransferase route): step 1/1. In terms of biological role, involved in the synthesis of meso-diaminopimelate (m-DAP or DL-DAP), required for both lysine and peptidoglycan biosynthesis. Catalyzes the direct conversion of tetrahydrodipicolinate to LL-diaminopimelate. This is LL-diaminopimelate aminotransferase from Nitratidesulfovibrio vulgaris (strain DP4) (Desulfovibrio vulgaris).